The chain runs to 399 residues: Serine/threonine transporter SstT (399 aa).

A run of 9 helical transmembrane segments spans residues 8–28 (LSLV…AFLF), 37–57 (IFGE…VFVL), 77–97 (ILFL…IADL), 134–154 (PVVA…IILG), 178–198 (VIHL…AVTF), 212–232 (LLLV…PIMV), 284–304 (VIIP…ITVL), 312–332 (LGIS…SISA), and 348–370 (VACS…GMVI).

It belongs to the dicarboxylate/amino acid:cation symporter (DAACS) (TC 2.A.23) family.

Its subcellular location is the cell inner membrane. It carries out the reaction L-serine(in) + Na(+)(in) = L-serine(out) + Na(+)(out). The enzyme catalyses L-threonine(in) + Na(+)(in) = L-threonine(out) + Na(+)(out). Involved in the import of serine and threonine into the cell, with the concomitant import of sodium (symport system). This Acinetobacter baylyi (strain ATCC 33305 / BD413 / ADP1) protein is Serine/threonine transporter SstT.